The following is a 387-amino-acid chain: Probable nitrate transporter NarT (387 aa).

12 consecutive transmembrane segments (helical) span residues 14 to 34 (TLSL…MPFI), 45 to 65 (ISVI…PFGY), 69 to 89 (IVGA…PIFL), 97 to 117 (GMLM…SVGV), 137 to 157 (GVGN…AGAI), 161 to 181 (NTVR…FFLG), 211 to 231 (WYFI…NFLV), 246 to 266 (GIFI…GDKF), 268 to 288 (AVQA…ILSL), 294 to 314 (LFTI…GLIF), 330 to 350 (GIVS…ITFV), and 358 to 378 (HLAF…MIHL).

It belongs to the major facilitator superfamily. Nitrate/nitrite porter (TC 2.A.1.8) family.

The protein resides in the cell membrane. Its function is as follows. Probably required for nitrate uptake under anoxic conditions. Also possibly involved in excretion of nitrite produced by the dissimilatory reduction of nitrate. This Staphylococcus epidermidis (strain ATCC 35984 / DSM 28319 / BCRC 17069 / CCUG 31568 / BM 3577 / RP62A) protein is Probable nitrate transporter NarT (narT).